A 778-amino-acid chain; its full sequence is Molybdenum cofactor sulfurase (778 aa).

Lys-235 carries the post-translational modification N6-(pyridoxal phosphate)lysine. Cys-399 is a catalytic residue. 2 disordered regions span residues 576 to 596 and 654 to 673; these read LSKN…SRVC and ARPA…DTEK. Low complexity predominate over residues 584–594; the sequence is RSSSSRSRSSR. An MOSC domain is found at 651-778; that stretch reads LPTARPALPG…ETAERARSRL (128 aa).

This sequence belongs to the class-V pyridoxal-phosphate-dependent aminotransferase family. MOCOS subfamily. It depends on pyridoxal 5'-phosphate as a cofactor.

The enzyme catalyses Mo-molybdopterin + L-cysteine + AH2 = thio-Mo-molybdopterin + L-alanine + A + H2O. It participates in cofactor biosynthesis; molybdopterin biosynthesis. Sulfurates the molybdenum cofactor. Sulfation of molybdenum is essential for xanthine dehydrogenase (XDH) and aldehyde oxidase (ADO) enzymes in which molybdenum cofactor is liganded by 1 oxygen and 1 sulfur atom in active form. In Chaetomium globosum (strain ATCC 6205 / CBS 148.51 / DSM 1962 / NBRC 6347 / NRRL 1970) (Soil fungus), this protein is Molybdenum cofactor sulfurase.